The sequence spans 412 residues: Na(+)/H(+) antiporter NhaA 1 (412 aa).

10 helical membrane-spanning segments follow: residues 34-54, 75-95, 114-134, 142-162, 183-203, 234-254, 282-302, 309-329, 349-369, and 379-399; these read VGGMVLLAAAALALVLANSPA, LTIGEWAKDGLLAIFFFVAGL, LPVVAALGGMVVPAVLAFAIG, AAWAIPVATDIAFALGVLSLT, LGAIVVIAVLFTSGLSVLALL, WIAVHSSGIHATIAGVALGLL, LIVPVFALFAAGVPVDGEALV, VAIAVVVGLVVGKLVGIFGSS, LSALAMLGGVGFTVSLLIAEL, and AKAAVLIASALASLLAAVMLL.

This sequence belongs to the NhaA Na(+)/H(+) (TC 2.A.33) antiporter family.

It localises to the cell membrane. It carries out the reaction Na(+)(in) + 2 H(+)(out) = Na(+)(out) + 2 H(+)(in). Its function is as follows. Na(+)/H(+) antiporter that extrudes sodium in exchange for external protons. The polypeptide is Na(+)/H(+) antiporter NhaA 1 (Saccharopolyspora erythraea (strain ATCC 11635 / DSM 40517 / JCM 4748 / NBRC 13426 / NCIMB 8594 / NRRL 2338)).